Consider the following 388-residue polypeptide: Chorismate synthase (388 aa).

Residues Arg39 and Arg45 each contribute to the NADP(+) site. Residues 130–132 (RSS), 251–252 (NA), Gly296, 311–315 (KPIPT), and Arg337 each bind FMN.

It belongs to the chorismate synthase family. In terms of assembly, homotetramer. FMNH2 serves as cofactor.

It catalyses the reaction 5-O-(1-carboxyvinyl)-3-phosphoshikimate = chorismate + phosphate. It functions in the pathway metabolic intermediate biosynthesis; chorismate biosynthesis; chorismate from D-erythrose 4-phosphate and phosphoenolpyruvate: step 7/7. Catalyzes the anti-1,4-elimination of the C-3 phosphate and the C-6 proR hydrogen from 5-enolpyruvylshikimate-3-phosphate (EPSP) to yield chorismate, which is the branch point compound that serves as the starting substrate for the three terminal pathways of aromatic amino acid biosynthesis. This reaction introduces a second double bond into the aromatic ring system. This chain is Chorismate synthase, found in Streptococcus agalactiae serotype V (strain ATCC BAA-611 / 2603 V/R).